Here is a 739-residue protein sequence, read N- to C-terminus: Ankyrin repeat and SAM domain-containing protein 6 (739 aa).

ANK repeat units lie at residues 1–30, 57–86, 91–120, 124–156, 158–188, 192–221, 226–255, and 259–290; these read MGAS…FVDD, LEVR…DARV, TGWS…DPDH, LGNT…RPDD, KKRP…QVDV, DGAS…DVDR, HGWT…DVQL, and NGYT…LVDK. Over residues 295-305 the composition is skewed to basic residues; the sequence is QRGKSALRRRA. Disordered stretches follow at residues 295-320 and 449-645; these read QRGK…TGLK and LRDA…ITDE. Positions 462-478 are enriched in polar residues; that stretch reads PGRSSAGSDTASISRVV. 2 stretches are compositionally biased toward low complexity: residues 490–506 and 582–592; these read GPSP…HSSG and SSRSKSTSPTL. Over residues 593-603 the composition is skewed to pro residues; the sequence is TPSPSPTPAHT. A compositionally biased stretch (low complexity) spans 604–641; sequence PAPAHTPAHRPTGASADSQGSASTQQRSRSSGGSSSGT. Residues 643-706 enclose the SAM domain; it reads TDEDELSGIL…LAAISELNAG (64 aa).

The protein localises to the cell projection. Its subcellular location is the cilium. Its function is as follows. Required for renal function. The sequence is that of Ankyrin repeat and SAM domain-containing protein 6 (anks6) from Danio rerio (Zebrafish).